The following is a 131-amino-acid chain: Anaerobic and virulence modulator AnvM (131 aa).

Plays an essential role by modulating the expression of hundreds of genes including quorum sensing system genes and oxidative stress resistance genes under both aerobic and anaerobic conditions. The protein is Anaerobic and virulence modulator AnvM of Pseudomonas aeruginosa (strain ATCC 15692 / DSM 22644 / CIP 104116 / JCM 14847 / LMG 12228 / 1C / PRS 101 / PAO1).